Reading from the N-terminus, the 184-residue chain is MSSLISKTIKYDPAKDKLITLACGCFWGTEHMYRKYLNDRIVDCKVGYANGEESKKDSPSSVSYKRVCGGDTDFAEVLQVSYNPKVITLRELTDFFFRIHDPTTSNSQGPDKGTQYRSGLFAHSDADLKELAKIKEEWQPKWGNKIATVIEPIKNFYDAEEYHQLYLDKNPQGYACPTHYLREM.

S58 carries the phosphoserine modification.

Belongs to the MsrA Met sulfoxide reductase family.

The catalysed reaction is L-methionyl-[protein] + [thioredoxin]-disulfide + H2O = L-methionyl-(S)-S-oxide-[protein] + [thioredoxin]-dithiol. It carries out the reaction [thioredoxin]-disulfide + L-methionine + H2O = L-methionine (S)-S-oxide + [thioredoxin]-dithiol. Its function is as follows. Has an important function as a repair enzyme for proteins that have been inactivated by oxidation. Catalyzes the reversible oxidation-reduction of methionine sulfoxide in proteins to methionine. Also able to reduce dimethyl sulfoxide (DMSO) as well, with DMS as the product. This chain is Peptide methionine sulfoxide reductase (MXR1), found in Saccharomyces cerevisiae (strain ATCC 204508 / S288c) (Baker's yeast).